The primary structure comprises 332 residues: Thiamine-binding periplasmic protein (332 aa).

An N-terminal signal peptide occupies residues 1-20; that stretch reads MKLLKLTLISTALFSTAALA. Thiamine is bound by residues tryptophan 202 and 220-223; that span reads YSTS.

The protein belongs to the bacterial solute-binding protein 1 family. The complex is composed of two ATP-binding proteins (ThiQ), two transmembrane proteins (ThiP) and a solute-binding protein (ThiB).

It localises to the periplasm. Its function is as follows. Part of the ABC transporter complex ThiBPQ involved in thiamine import. The polypeptide is Thiamine-binding periplasmic protein (thiB) (Haemophilus influenzae (strain ATCC 51907 / DSM 11121 / KW20 / Rd)).